Reading from the N-terminus, the 453-residue chain is Ferruginol synthase (453 aa).

The helical transmembrane segment at 15–35 threads the bilayer; the sequence is LSKKYGPLMSIHLGSLYTVIV. Cysteine 397 is a binding site for heme.

It belongs to the cytochrome P450 family. Heme is required as a cofactor. Expressed in leaf glandular trichomes.

It is found in the membrane. The enzyme catalyses abieta-8,11,13-triene + reduced [NADPH--hemoprotein reductase] + O2 = ferruginol + oxidized [NADPH--hemoprotein reductase] + H2O + H(+). It catalyses the reaction ferruginol + reduced [NADPH--hemoprotein reductase] + O2 = 11-hydroxyferruginol + oxidized [NADPH--hemoprotein reductase] + H2O + H(+). The catalysed reaction is miltiradiene + 2 reduced [NADPH--hemoprotein reductase] + 2 O2 = 11-oxomiltiradiene + 2 oxidized [NADPH--hemoprotein reductase] + 3 H2O + 2 H(+). It participates in secondary metabolite biosynthesis; terpenoid biosynthesis. Functionally, monooxygenase involved in the biosynthesis of labdane-related diterpenes natural products. Catalyzes the oxidation of abietatriene to produce ferruginol. Ferruginol is an intermediate in the biosynthesis of carnosate, a potent antioxidant. May also convert miltiradiene into 11-oxomiltiradiene. The sequence is that of Ferruginol synthase from Salvia pomifera (Apple sage).